A 355-amino-acid chain; its full sequence is Spore germination protein XB (355 aa).

The next 10 membrane-spanning stretches (helical) occupy residues 2–24 (VNFFQIALVLIGSTGIINHVIII), 34–56 (DSWISIIILSLVYIIWIPCVFIV), 69–91 (LMRNYGGFITYPLLSIIVLYLII), 106–128 (FYLPETPRILLGVLLSIICFYNI), 135–157 (IALTTGILLPVVFLLGFFVMIAN), 180–197 (GMIYPAAGFVELIFILFL), 210–232 (LIIVGIILAGITLGPTIAAIVEF), 265–287 (VYQWLVGVFIRISLVIFLIPDVL), 299–321 (ISILLICMVIICILPISDASFYW), and 326–348 (VFLPISAIGLFLFSMLLLVFVWV).

It belongs to the amino acid-polyamine-organocation (APC) superfamily. Spore germination protein (SGP) (TC 2.A.3.9) family.

The protein localises to the cell membrane. Its function is as follows. May allow B.anthracis to germinate within phagocytic cells and therefore involved in virulence. This chain is Spore germination protein XB (gerXB), found in Bacillus anthracis.